The following is a 756-amino-acid chain: Catalase-peroxidase (756 aa).

Residues 91–244 (WHSAGTYRTG…LAAVQMGLIY (154 aa)) constitute a cross-link (tryptophyl-tyrosyl-methioninium (Trp-Tyr) (with M-270)). Catalysis depends on His-92, which acts as the Proton acceptor. A disordered region spans residues 198-230 (AQKKMQQPGDGTLVAEPENHANEESRTASGERN). Basic and acidic residues predominate over residues 214–223 (PENHANEESR). Positions 244–270 (YVNPEGPEGVPDPVASAKDIRETFGRM) form a cross-link, tryptophyl-tyrosyl-methioninium (Tyr-Met) (with W-91). Residue His-285 coordinates heme b. The segment at 371 to 390 (KNGAGAGKIPDAHDPSKRHA) is disordered.

The protein belongs to the peroxidase family. Peroxidase/catalase subfamily. As to quaternary structure, homodimer or homotetramer. Heme b serves as cofactor. In terms of processing, formation of the three residue Trp-Tyr-Met cross-link is important for the catalase, but not the peroxidase activity of the enzyme.

It catalyses the reaction H2O2 + AH2 = A + 2 H2O. The enzyme catalyses 2 H2O2 = O2 + 2 H2O. Functionally, bifunctional enzyme with both catalase and broad-spectrum peroxidase activity. The chain is Catalase-peroxidase from Pseudomonas savastanoi pv. phaseolicola (strain 1448A / Race 6) (Pseudomonas syringae pv. phaseolicola (strain 1448A / Race 6)).